Consider the following 694-residue polypeptide: Elongation factor G (694 aa).

Residues lysine 11 to leucine 285 form the tr-type G domain. GTP contacts are provided by residues alanine 20–threonine 27, aspartate 84–histidine 88, and asparagine 138–aspartate 141.

Belongs to the TRAFAC class translation factor GTPase superfamily. Classic translation factor GTPase family. EF-G/EF-2 subfamily.

It localises to the cytoplasm. Functionally, catalyzes the GTP-dependent ribosomal translocation step during translation elongation. During this step, the ribosome changes from the pre-translocational (PRE) to the post-translocational (POST) state as the newly formed A-site-bound peptidyl-tRNA and P-site-bound deacylated tRNA move to the P and E sites, respectively. Catalyzes the coordinated movement of the two tRNA molecules, the mRNA and conformational changes in the ribosome. The sequence is that of Elongation factor G from Mycoplasma mobile (strain ATCC 43663 / 163K / NCTC 11711) (Mesomycoplasma mobile).